The chain runs to 343 residues: Putative ALA-interacting subunit 2 (343 aa).

Residues 43–63 (PISVITVFMLMGFVFIPIGLI) traverse the membrane as a helical segment. Residues Asn-103, Asn-178, Asn-191, and Asn-218 are each glycosylated (N-linked (GlcNAc...) asparagine). The chain crosses the membrane as a helical span at residues 301-321 (FLGITYLVVGSSSIVISIIFM).

The protein belongs to the CDC50/LEM3 family. In terms of tissue distribution, expressed in roots, leaves, stems, flowers and siliques.

The protein localises to the membrane. This is Putative ALA-interacting subunit 2 (ALIS2) from Arabidopsis thaliana (Mouse-ear cress).